A 96-amino-acid chain; its full sequence is MPAIEIGRICVKVAGREAGRKCVIVDIIDENFVLITGPKSLTGVKRRRANVKHIEPLDKVIDISRGASDEEVLRAIANAGLTEFMKEIVKPKLVPV.

It belongs to the eukaryotic ribosomal protein eL14 family.

The polypeptide is Large ribosomal subunit protein eL14 (Staphylothermus marinus (strain ATCC 43588 / DSM 3639 / JCM 9404 / F1)).